The chain runs to 203 residues: 3-isopropylmalate dehydratase small subunit (203 aa).

This sequence belongs to the LeuD family. LeuD type 1 subfamily. In terms of assembly, heterodimer of LeuC and LeuD.

The catalysed reaction is (2R,3S)-3-isopropylmalate = (2S)-2-isopropylmalate. It functions in the pathway amino-acid biosynthesis; L-leucine biosynthesis; L-leucine from 3-methyl-2-oxobutanoate: step 2/4. Its function is as follows. Catalyzes the isomerization between 2-isopropylmalate and 3-isopropylmalate, via the formation of 2-isopropylmaleate. The sequence is that of 3-isopropylmalate dehydratase small subunit from Pelagibacter ubique (strain HTCC1062).